A 271-amino-acid chain; its full sequence is Thiazole synthase (271 aa).

The active-site Schiff-base intermediate with DXP is Lys95. Residues Gly156, 182–183 (AG), and 204–205 (NT) each bind 1-deoxy-D-xylulose 5-phosphate.

Belongs to the ThiG family. In terms of assembly, homotetramer. Forms heterodimers with either ThiH or ThiS.

It localises to the cytoplasm. The enzyme catalyses [ThiS sulfur-carrier protein]-C-terminal-Gly-aminoethanethioate + 2-iminoacetate + 1-deoxy-D-xylulose 5-phosphate = [ThiS sulfur-carrier protein]-C-terminal Gly-Gly + 2-[(2R,5Z)-2-carboxy-4-methylthiazol-5(2H)-ylidene]ethyl phosphate + 2 H2O + H(+). The protein operates within cofactor biosynthesis; thiamine diphosphate biosynthesis. Functionally, catalyzes the rearrangement of 1-deoxy-D-xylulose 5-phosphate (DXP) to produce the thiazole phosphate moiety of thiamine. Sulfur is provided by the thiocarboxylate moiety of the carrier protein ThiS. In vitro, sulfur can be provided by H(2)S. This chain is Thiazole synthase, found in Yersinia pseudotuberculosis serotype O:3 (strain YPIII).